A 242-amino-acid chain; its full sequence is UPF0246 protein SP70585_1589 (242 aa).

The protein belongs to the UPF0246 family.

In Streptococcus pneumoniae (strain 70585), this protein is UPF0246 protein SP70585_1589.